The chain runs to 626 residues: MSRILDRVDSPSDLKGLTTAELGILAEEIRQEIITVCSRNGGHLAPSLGVVELTLALHRVFTSPEDKIVWDVGHQAYAHKLVTGRRDRFATLRTLGGISGFLKRAESPHDVFDAGHASTSISAALGLAAARDLAGRNNKVVAVIGDGSMTGGIAYEGLNHAGHLNRDLVVVLNDNEMSIAENVGALSNFLSRTVTSEFVHTLKKDVETFLGGLDRIGRNVLKVAKRAEESLKGLFTPGMLFEAFGFEYIGPIDGHDIGRLTETFEKVKRFDDAVLIHVLTKKGKGFAPAEAKPSLFHGVGPFDPVSGEIVKGKGGATSYTGVFGQALTRIADEDERVVAITAAMPDGTGLGSFSARHPGRFFDVGIAEQHGVTFAAGLAAEGYRPVFAIYSSFLQRAYDQLFHDVCLMNLPVTFAIDRSGVVGSDGPTHHGLFDLSYLRTLPNMVVMAPKDENELQHMLKTAIDHNGPAAVRYPRGNGLGVPLDQSLAPIPLGTSEVLRAGSGTCVVLAVGAMVGPALEAANTLEGEGIDLTVVNVRFVKPLDRELILSYVGRAGTLVTIEENVLQGGFGSAVLELLADEGVGGVAVHRFGYPDRYVEQGEQHELRSRYGLDAEGIAGRIRTLSAR.

Residues His74 and 115–117 (GHA) each bind thiamine diphosphate. Asp146 serves as a coordination point for Mg(2+). Residues 147–148 (GS), Asn175, Phe286, and Glu368 contribute to the thiamine diphosphate site. Asn175 contacts Mg(2+).

This sequence belongs to the transketolase family. DXPS subfamily. As to quaternary structure, homodimer. Mg(2+) serves as cofactor. The cofactor is thiamine diphosphate.

The catalysed reaction is D-glyceraldehyde 3-phosphate + pyruvate + H(+) = 1-deoxy-D-xylulose 5-phosphate + CO2. It functions in the pathway metabolic intermediate biosynthesis; 1-deoxy-D-xylulose 5-phosphate biosynthesis; 1-deoxy-D-xylulose 5-phosphate from D-glyceraldehyde 3-phosphate and pyruvate: step 1/1. In terms of biological role, catalyzes the acyloin condensation reaction between C atoms 2 and 3 of pyruvate and glyceraldehyde 3-phosphate to yield 1-deoxy-D-xylulose-5-phosphate (DXP). In Geobacter sulfurreducens (strain ATCC 51573 / DSM 12127 / PCA), this protein is 1-deoxy-D-xylulose-5-phosphate synthase 2.